We begin with the raw amino-acid sequence, 255 residues long: Polycomb group RING finger protein 5 (255 aa).

An RING-type zinc finger spans residues 18-57 (CYICKGYLIKPTTVTECLHTFCKTCIVQHFEDSNDCPRCG). The tract at residues 97–132 (WKKNKPQENGQDDMSKVDKPKVDEEGDENQDDKDYH) is disordered. Residues 109–119 (DMSKVDKPKVD) show a composition bias toward basic and acidic residues.

In terms of assembly, component of a PRC1-like complex that contains PCGF5, RNF2 and UBE2D3. Interacts with RNF2; the interaction is direct. Interacts with CBX6, CBX7 and CBX8. Interacts with AUTS2; the interaction is direct. Identified in a complex that contains AUTS2, PCGF5, CSNK2B and RNF2.

The protein resides in the nucleus. The protein localises to the nucleoplasm. Functionally, component of a Polycomb group (PcG) multiprotein PRC1-like complex, a complex class required to maintain the transcriptionally repressive state of many genes, including Hox genes, throughout development. PcG PRC1 complex acts via chromatin remodeling and modification of histones; it mediates monoubiquitination of histone H2A 'Lys-119', rendering chromatin heritably changed in its expressibility. Within the PRC1-like complex, regulates RNF2 ubiquitin ligase activity. Plays a redundant role with PCGF3 as part of a PRC1-like complex that mediates monoubiquitination of histone H2A 'Lys-119' on the X chromosome and is required for normal silencing of one copy of the X chromosome in XX females. This chain is Polycomb group RING finger protein 5 (PCGF5), found in Bos taurus (Bovine).